The sequence spans 71 residues: Large ribosomal subunit protein uL29 (71 aa).

It belongs to the universal ribosomal protein uL29 family. As to quaternary structure, part of the 50S ribosomal subunit. Interacts with protein L23.

Its function is as follows. Stabilizes the tertiary rRNA structure within the 23S rRNA domain (domain I) to which it binds. Located at the polypeptide exit tunnel on the outside of the subunit. The chain is Large ribosomal subunit protein uL29 (rpl29) from Haloarcula marismortui (strain ATCC 43049 / DSM 3752 / JCM 8966 / VKM B-1809) (Halobacterium marismortui).